The chain runs to 159 residues: MRAALPPARLLPLLLLLALLGAPAARASRAQSAAPPQPGAERQPRPPPGPGPGNATGTGSGEAAGGGGSSNSSGDALVTRISSLLRDLHTLKAAVIVACAFTAFLIACLLLRVFRSGKRLKKTRKYDIITTPAERVEMAPLNEEDDEDEDSTVFDIKYR.

The first 27 residues, 1 to 27, serve as a signal peptide directing secretion; that stretch reads MRAALPPARLLPLLLLLALLGAPAARA. A disordered region spans residues 28-73; that stretch reads SRAQSAAPPQPGAERQPRPPPGPGPGNATGTGSGEAAGGGGSSNSS. The Extracellular portion of the chain corresponds to 28 to 90; it reads SRAQSAAPPQ…ISSLLRDLHT (63 aa). A compositionally biased stretch (gly residues) spans 52 to 69; sequence PGNATGTGSGEAAGGGGS. Asparagine 54 carries an N-linked (GlcNAc...) asparagine glycan. Residues 91–111 form a helical membrane-spanning segment; that stretch reads LKAAVIVACAFTAFLIACLLL. Topologically, residues 112-159 are cytoplasmic; the sequence is RVFRSGKRLKKTRKYDIITTPAERVEMAPLNEEDDEDEDSTVFDIKYR.

The protein belongs to the FAM174 family.

The protein localises to the cell membrane. It localises to the golgi apparatus. Functionally, essential for Golgi structural integrity. The polypeptide is Membrane protein FAM174B (FAM174B) (Bos taurus (Bovine)).